Here is a 221-residue protein sequence, read N- to C-terminus: Riboflavin kinase (221 aa).

The tract at residues 1 to 92 is H-T-H motif-like; the sequence is MVTPEDLECL…YRLFGRQEKS (92 aa). The interval 93–221 is riboflavin kinase; that stretch reads LMLNGTVQSG…GDEVTIEVTL (129 aa). 102-107 provides a ligand contact to CDP; that stretch reads GLGEGA. Mg(2+) contacts are provided by T131 and N133. Positions 188 and 196 each coordinate FMN. 201–204 lines the CDP pocket; that stretch reads EGLR.

The protein belongs to the archaeal riboflavin kinase family. Mg(2+) is required as a cofactor.

The enzyme catalyses riboflavin + CTP = CDP + FMN + H(+). It participates in cofactor biosynthesis; FMN biosynthesis; FMN from riboflavin (CTP route): step 1/1. Functionally, catalyzes the CTP-dependent phosphorylation of riboflavin (vitamin B2) to form flavin mononucleotide (FMN). The polypeptide is Riboflavin kinase (ribK) (Methanospirillum hungatei JF-1 (strain ATCC 27890 / DSM 864 / NBRC 100397 / JF-1)).